The chain runs to 300 residues: GTP-binding protein At2g22870 (300 aa).

The EngB-type G domain maps to 119–297 (DRPEIAILGR…LLHMSQLRNY (179 aa)). GTP-binding positions include 127 to 134 (GRSNVGKS), 154 to 158 (GKTQL), 172 to 175 (DLPG), 239 to 242 (TKCD), and 276 to 278 (TSS). The Mg(2+) site is built by Ser-134 and Thr-156.

Belongs to the TRAFAC class TrmE-Era-EngA-EngB-Septin-like GTPase superfamily. EngB GTPase family. It depends on Mg(2+) as a cofactor.

In Arabidopsis thaliana (Mouse-ear cress), this protein is GTP-binding protein At2g22870 (EMB2001).